Here is a 357-residue protein sequence, read N- to C-terminus: Decorin (357 aa).

Residues 1–16 (MRLVLLFVLLLPVCLA) form the signal peptide. The propeptide occupies 17 to 30 (TRFHQKGLFDFMIE). Ser46 carries O-linked (Xyl...) (glycosaminoglycan) serine glycosylation. Cystine bridges form between Cys52-Cys58 and Cys56-Cys65. LRR repeat units lie at residues 71–91 (ERVPKDLPPDTTLLDLQNNKI), 92–115 (TEIKEGDFKNLKNLHALILVNNKI), 116–139 (SKISPAAFAPLKKLERLYLSKNNL), 140–160 (KELPENMPKSLQEIRAHENEI), 161–184 (SKLRKAVFNGLNQVIVLELGTNPL), 185–210 (KSSGIENGAFQGMKRLSYIRIADTNI), 211–231 (TSIPKGLPPSLTELHLDGNKI), 232–255 (SKIDAEGLSGLTNLAKLGLSFNSI), 256–279 (SSVENGSLNNVPHLRELHLNNNEL), 280–302 (VRVPSGLGEHKYIQVVYLHNNKI), 303–332 (ASIGINDFCPLGYNTKKATYSGVSLFSNPV), and 333–357 (QYWEIQPSAFRCIHERSAVQIGNYK). An N-linked (GlcNAc...) asparagine glycan is attached at Asn209. N-linked (GlcNAc...) asparagine glycosylation occurs at Asn260. A disulfide bridge connects residues Cys311 and Cys344.

This sequence belongs to the small leucine-rich proteoglycan (SLRP) family. SLRP class I subfamily. Binds to type I and type II collagen, to fibronectin and TGF-beta. Forms a ternary complex with MFAP2 and ELN. The attached glycosaminoglycan chain can be either chondroitin sulfate or dermatan sulfate depending upon the tissue of origin.

The protein resides in the secreted. It localises to the extracellular space. Its subcellular location is the extracellular matrix. In terms of biological role, may affect the rate of fibrils formation. This chain is Decorin (DCN), found in Gallus gallus (Chicken).